A 274-amino-acid polypeptide reads, in one-letter code: Shikimate dehydrogenase (NADP(+)) (274 aa).

Shikimate-binding positions include 15-17 (SKS) and T62. The active-site Proton acceptor is K66. D78 contacts NADP(+). N87 and D102 together coordinate shikimate. NADP(+) is bound by residues 127-131 (GAGGA) and M215. Y217 is a shikimate binding site. G239 contacts NADP(+).

Belongs to the shikimate dehydrogenase family. Homodimer.

The enzyme catalyses shikimate + NADP(+) = 3-dehydroshikimate + NADPH + H(+). It participates in metabolic intermediate biosynthesis; chorismate biosynthesis; chorismate from D-erythrose 4-phosphate and phosphoenolpyruvate: step 4/7. Its function is as follows. Involved in the biosynthesis of the chorismate, which leads to the biosynthesis of aromatic amino acids. Catalyzes the reversible NADPH linked reduction of 3-dehydroshikimate (DHSA) to yield shikimate (SA). In Dechloromonas aromatica (strain RCB), this protein is Shikimate dehydrogenase (NADP(+)).